The following is a 463-amino-acid chain: MGKLFGTDGIRGFANIYPMTVEVALKTGRAVARFAKEHGGTVVIIGRDTRRSGDMLEAALAAGISSMGINVLEAGVIPTPGVAFLTATVKGAGAGVVISASHNPFHDNGIKVFKSGGLKLTDPEEAKIESYIFDAGPDRADSSICEPKTSDSAIEPGTISTISNASAQYANFLTSCYQRDLDKNTPDQPLKIVVDCSNGASFKVAPMVFPTLGFETQFIFDTPDGKNINHNCGSQHTETLAKRVISTGADLGLAFDGDADRLIAIDEQGVKLTGDKILAICANHAKAQGRLTNNLVITTVMSNIGLSKALERLGIDHIKTGVGDREVLKEMWATGAVMGGEDSGHMIFSEFHSTGDGILSALCLIRVMVDTNKSLSDLATIMTVYPQVLMNVEVDPSRPDFMKIETIAREIKRVEQALNSSGRVLVRYSGTQPLLRVMVEGPDLEATKSHCQSICDAIKQASI.

The Phosphoserine intermediate role is filled by serine 101. Mg(2+) is bound by residues serine 101, aspartate 256, aspartate 258, and aspartate 260. Position 101 is a phosphoserine (serine 101).

Belongs to the phosphohexose mutase family. Mg(2+) serves as cofactor. Activated by phosphorylation.

It carries out the reaction alpha-D-glucosamine 1-phosphate = D-glucosamine 6-phosphate. Functionally, catalyzes the conversion of glucosamine-6-phosphate to glucosamine-1-phosphate. The chain is Phosphoglucosamine mutase from Desulforapulum autotrophicum (strain ATCC 43914 / DSM 3382 / VKM B-1955 / HRM2) (Desulfobacterium autotrophicum).